Consider the following 382-residue polypeptide: Lipid-A-disaccharide synthase (382 aa).

Belongs to the LpxB family.

The catalysed reaction is a lipid X + a UDP-2-N,3-O-bis[(3R)-3-hydroxyacyl]-alpha-D-glucosamine = a lipid A disaccharide + UDP + H(+). It participates in bacterial outer membrane biogenesis; LPS lipid A biosynthesis. Its function is as follows. Condensation of UDP-2,3-diacylglucosamine and 2,3-diacylglucosamine-1-phosphate to form lipid A disaccharide, a precursor of lipid A, a phosphorylated glycolipid that anchors the lipopolysaccharide to the outer membrane of the cell. The chain is Lipid-A-disaccharide synthase from Koribacter versatilis (strain Ellin345).